A 429-amino-acid polypeptide reads, in one-letter code: Phosphoribosylamine--glycine ligase (429 aa).

The 208-residue stretch at 109–316 (KDFLARHNIP…LVELCLAACE (208 aa)) folds into the ATP-grasp domain. Position 135–196 (135–196 (LREKGAPIVI…EEFLDGEEAS (62 aa))) interacts with ATP. Residues 212–237 (SQDHKRVGDKDTGPNTGGMGAYSPAP) are disordered. Positions 213 to 223 (QDHKRVGDKDT) are enriched in basic and acidic residues. Positions 286 and 288 each coordinate Mg(2+).

This sequence belongs to the GARS family. As to quaternary structure, monomer. It depends on Mg(2+) as a cofactor. The cofactor is Mn(2+).

The catalysed reaction is 5-phospho-beta-D-ribosylamine + glycine + ATP = N(1)-(5-phospho-beta-D-ribosyl)glycinamide + ADP + phosphate + H(+). It participates in purine metabolism; IMP biosynthesis via de novo pathway; N(1)-(5-phospho-D-ribosyl)glycinamide from 5-phospho-alpha-D-ribose 1-diphosphate: step 2/2. This is Phosphoribosylamine--glycine ligase from Escherichia coli O157:H7.